Reading from the N-terminus, the 228-residue chain is 7-cyano-7-deazaguanine synthase (228 aa).

16-26 is a binding site for ATP; that stretch reads FSGGQDSTTCL. 4 residues coordinate Zn(2+): C195, C203, C206, and C209.

The protein belongs to the QueC family. Zn(2+) serves as cofactor.

The catalysed reaction is 7-carboxy-7-deazaguanine + NH4(+) + ATP = 7-cyano-7-deazaguanine + ADP + phosphate + H2O + H(+). It functions in the pathway purine metabolism; 7-cyano-7-deazaguanine biosynthesis. Catalyzes the ATP-dependent conversion of 7-carboxy-7-deazaguanine (CDG) to 7-cyano-7-deazaguanine (preQ(0)). In Haemophilus influenzae (strain ATCC 51907 / DSM 11121 / KW20 / Rd), this protein is 7-cyano-7-deazaguanine synthase.